The sequence spans 162 residues: Small ribosomal subunit protein uS13 (162 aa).

Residues 142 to 162 (RGQRTKSTGRRGSTVGVSRKK) are disordered.

It belongs to the universal ribosomal protein uS13 family. In terms of assembly, part of the 30S ribosomal subunit. Forms a loose heterodimer with protein S19. Forms two bridges to the 50S subunit in the 70S ribosome.

Its function is as follows. Located at the top of the head of the 30S subunit, it contacts several helices of the 16S rRNA. In the 70S ribosome it contacts the 23S rRNA (bridge B1a) and protein L5 of the 50S subunit (bridge B1b), connecting the 2 subunits; these bridges are implicated in subunit movement. The polypeptide is Small ribosomal subunit protein uS13 (Methanosarcina acetivorans (strain ATCC 35395 / DSM 2834 / JCM 12185 / C2A)).